The following is a 321-amino-acid chain: Peroxidase 28 (321 aa).

The signal sequence occupies residues 1–21 (MKIATFSVLLLLLFIFPVALA). Cystine bridges form between C32/C111, C65/C70, C117/C317, and C196/C228. H63 acts as the Proton acceptor in catalysis. The Ca(2+) site is built by D64, V67, G69, D71, and S73. Residue P159 coordinates substrate. H189 contacts heme b. A Ca(2+)-binding site is contributed by T190. D238, T244, and D249 together coordinate Ca(2+).

Belongs to the peroxidase family. Classical plant (class III) peroxidase subfamily. Heme b is required as a cofactor. It depends on Ca(2+) as a cofactor.

It is found in the secreted. It catalyses the reaction 2 a phenolic donor + H2O2 = 2 a phenolic radical donor + 2 H2O. In terms of biological role, removal of H(2)O(2), oxidation of toxic reductants, biosynthesis and degradation of lignin, suberization, auxin catabolism, response to environmental stresses such as wounding, pathogen attack and oxidative stress. These functions might be dependent on each isozyme/isoform in each plant tissue. This Arabidopsis thaliana (Mouse-ear cress) protein is Peroxidase 28 (PER28).